A 66-amino-acid polypeptide reads, in one-letter code: MVKVKFKYKGEEKEVDTSKIKKVWRVGKMVSFTYDDNGKTGRGAVSEKDAPKELLDMLARAEREKK.

Residues K5 and K7 each carry the N6-methyllysine; partial modification.

The protein belongs to the 7 kDa DNA-binding/endoribonuclease P2 family. As to quaternary structure, monomer. Post-translationally, lys-5 was 70% monomethylated in form 7a, 25% in form 7b, and 20% in form 7d. Lys-7 was 50% monomethylated in form 7a, 40% in form 7b, and 50% in form 7d.

It is found in the cytoplasm. Its function is as follows. Can constrain negative DNA supercoils. May be involved in maintaining the integrity of the genome at high temperature. This Sulfolobus acidocaldarius (strain ATCC 33909 / DSM 639 / JCM 8929 / NBRC 15157 / NCIMB 11770) protein is DNA-binding protein 7d.